The following is a 516-amino-acid chain: uncharacterized protein (516 aa).

PFTB repeat units follow at residues 45–86 and 401–443; these read RQDA…QRAD and DERA…DGSE.

This is an uncharacterized protein from Sinorhizobium fredii (strain NBRC 101917 / NGR234).